The primary structure comprises 380 residues: Tomoregulin-1 (380 aa).

A signal peptide spans Met-1–Ala-39. Over Ser-40–Val-330 the chain is Extracellular. Kazal-like domains lie at Ala-98–Ser-145 and Val-189–Asp-237. Cystine bridges form between Cys-99–Cys-129, Cys-103–Cys-122, Cys-111–Cys-143, Cys-190–Cys-221, Cys-194–Cys-214, Cys-203–Cys-235, Cys-275–Cys-288, Cys-283–Cys-299, and Cys-301–Cys-310. Residues Asn-271–Glu-311 enclose the EGF-like domain. A helical membrane pass occupies residues Leu-331 to Ile-351. Residues Thr-352–Val-380 are Cytoplasmic-facing. A disordered region spans residues Asn-359 to Val-380. The span at Gln-366 to Val-380 shows a compositional bias: polar residues.

Belongs to the tomoregulin family. In terms of assembly, may interact with ST14. In terms of tissue distribution, expressed predominantly in brain, and at lower levels in heart, placenta and skeletal muscle. Down-regulated in brain tumors as compared to control brain tissues.

The protein localises to the cell membrane. Its function is as follows. Neuron-specific restriction factor that prevents herpes simplex virus 1 (HHV-1) infection in the brain by blocking viral entry. Also able to restrict herpes simplex virus 2 (HHV-2) infection, although to a lesser extent. Acts by preventing the association between the viral glycoprotein D (gD) and its cell surface receptor NECTIN1, thereby inhibiting fusion of the virus and the cell membrane. Also able to prevent the association between the viral glycoprotein B (gB) and MYH9/NMMHC-IIA and MYH10/NMMHC-IIB receptors. May be a tumor suppressor in brain cancers. This Homo sapiens (Human) protein is Tomoregulin-1.